The following is a 118-amino-acid chain: Large ribosomal subunit protein bL19 (118 aa).

It belongs to the bacterial ribosomal protein bL19 family.

In terms of biological role, this protein is located at the 30S-50S ribosomal subunit interface and may play a role in the structure and function of the aminoacyl-tRNA binding site. The sequence is that of Large ribosomal subunit protein bL19 from Helicobacter acinonychis (strain Sheeba).